Reading from the N-terminus, the 65-residue chain is Beta-toxin Tf4a (65 aa).

In terms of domain architecture, LCN-type CS-alpha/beta spans 2–63; sequence KEGYPADSKG…VWDSATNKCG (62 aa). 4 disulfides stabilise this stretch: Cys12-Cys62, Cys16-Cys38, Cys24-Cys43, and Cys28-Cys45. A Cysteine amide modification is found at Cys62.

Belongs to the long (4 C-C) scorpion toxin superfamily. Sodium channel inhibitor family. Alpha subfamily. In terms of tissue distribution, expressed by the venom gland.

It localises to the secreted. Its function is as follows. Alpha toxins bind voltage-independently at site-3 of sodium channels (Nav) and inhibit the inactivation of the activated channels, thereby blocking neuronal transmission. This toxin is toxic to frogs but non-toxic to insect larvae (T.molitor), mammals (rats) and crustaceans (crabs) at the doses assayed. The protein is Beta-toxin Tf4a of Tityus fasciolatus (Central Brazilian scorpion).